The chain runs to 1791 residues: MDDRCYPVIFPDERNFRPFTSDSLAAIEKRIAIQKEKKKSKDQTGEVPQPRPQLDLKASRKLPKLYGDIPRELIGKPLEDLDPFYRNHKTFMVLNRKRTIYRFSAKHALFIFGPFNSIRSLAIRVSVHSLFSMFIIGTVIINCVFMATGPAKNSNSNNTDIAECVFTGIYIFEALIKILARGFILDEFSFLRDPWNWLDSIVIGIAIVSYIPGITIKLLPLRTFRVFRALKAISVVSRLKVIVGALLRSVKKLVNVIILTFFCLSIFALVGQQLFMGSLNLKCISRDCKNISNPEAYDHCFEKKENSPEFKMCGIWMGNSACSIQYECKHTKINPDYNYTNFDNFGWSFLAMFRLMTQDSWEKLYQQTLRTTGLYSVFFFIVVIFLGSFYLINLTLAVVTMAYEEQNKNVAAEIEAKEKMFQEAQQLLKEEKEALVAMGIDRSSLTSLETSYFTPKKRKLFGNKKRKSFFLRESGKDQPPGSDSDEDCQKKPQLLEQTKRLSQNLSLDHFDEHGDPLQRQRALSAVSILTITMKEQEKSQEPCLPCGENLASKYLVWNCCPQWLCVKKVLRTVMTDPFTELAITICIIINTVFLAMEHHKMEASFEKMLNIGNLVFTSIFIAEMCLKIIALDPYHYFRRGWNIFDSIVALLSFADVMNCVLQKRSWPFLRSFRVLRVFKLAKSWPTLNTLIKIIGNSVGALGSLTVVLVIVIFIFSVVGMQLFGRSFNSQKSPKLCNPTGPTVSCLRHWHMGDFWHSFLVVFRILCGEWIENMWECMQEANASSSLCVIVFILITVIGKLVVLNLFIALLLNSFSNEERNGNLEGEARKTKVQLALDRFRRAFCFVRHTLEHFCHKWCRKQNLPQQKEVAGGCAAQSKDIIPLVMEMKRGSETQEELGILTSVPKTLGVRHDWTWLAPLAEEEDDVEFSGEDNAQRITQPEPEQQAYELHQENKKPTSQRVQSVEIDMFSEDEPHLTIQDPRKKSDVTSILSECSTIDLQDGFGWLPEMVPKKQPERCLPKGFGCCFPCCSVDKRKPPWVIWWNLRKTCYQIVKHSWFESFIIFVILLSSGALIFEDVHLENQPKIQELLNCTDIIFTHIFILEMVLKWVAFGFGKYFTSAWCCLDFIIVIVSVTTLINLMELKSFRTLRALRPLRALSQFEGMKVVVNALIGAIPAILNVLLVCLIFWLVFCILGVYFFSGKFGKCINGTDSVINYTIITNKSQCESGNFSWINQKVNFDNVGNAYLALLQVATFKGWMDIIYAAVDSTEKEQQPEFESNSLGYIYFVVFIIFGSFFTLNLFIGVIIDNFNQQQKKLGGQDIFMTEEQKKYYNAMKKLGSKKPQKPIPRPLNKCQGLVFDIVTSQIFDIIIISLIILNMISMMAESYNQPKAMKSILDHLNWVFVVIFTLECLIKIFALRQYYFTNGWNLFDCVVVLLSIVSTMISTLENQEHIPFPPTLFRIVRLARIGRILRLVRAARGIRTLLFALMMSLPSLFNIGLLLFLIMFIYAILGMNWFSKVNPESGIDDIFNFKTFASSMLCLFQISTSAGWDSLLSPMLRSKESCNSSSENCHLPGIATSYFVSYIIISFLIVVNMYIAVILENFNTATEESEDPLGEDDFDIFYEVWEKFDPEATQFIKYSALSDFADALPEPLRVAKPNKYQFLVMDLPMVSEDRLHCMDILFAFTARVLGGSDGLDSMKAMMEEKFMEANPLKKLYEPIVTTTKRKEEERGAAIIQKAFRKYMMKVTKGDQGDQNDLENGPHSPLQTLCNGDLSSFGVAKGKVHCD.

Residues 1–126 (MDDRCYPVIF…SIRSLAIRVS (126 aa)) lie on the Cytoplasmic side of the membrane. An I repeat occupies 115–408 (FNSIRSLAIR…VTMAYEEQNK (294 aa)). Residues 127 to 148 (VHSLFSMFIIGTVIINCVFMAT) traverse the membrane as a helical segment. Topologically, residues 149-156 (GPAKNSNS) are extracellular. A helical transmembrane segment spans residues 157–180 (NNTDIAECVFTGIYIFEALIKILA). At 181–192 (RGFILDEFSFLR) the chain is on the cytoplasmic side. A helical transmembrane segment spans residues 193 to 212 (DPWNWLDSIVIGIAIVSYIP). Topologically, residues 213–219 (GITIKLL) are extracellular. The helical; Voltage-sensor transmembrane segment at 220–239 (PLRTFRVFRALKAISVVSRL) threads the bilayer. The Cytoplasmic segment spans residues 240-255 (KVIVGALLRSVKKLVN). The chain crosses the membrane as a helical span at residues 256 to 269 (VIILTFFCLSIFAL). Residues 270-344 (VGQQLFMGSL…PDYNYTNFDN (75 aa)) lie on the Extracellular side of the membrane. Cysteine 283 and cysteine 322 are disulfide-bonded. Residues asparagine 290 and asparagine 338 are each glycosylated (N-linked (GlcNAc...) asparagine). Residues 345–369 (FGWSFLAMFRLMTQDSWEKLYQQTL) constitute an intramembrane region (pore-forming). Topologically, residues 370-376 (RTTGLYS) are extracellular. A helical membrane pass occupies residues 377–402 (VFFFIVVIFLGSFYLINLTLAVVTMA). At 403–572 (YEEQNKNVAA…WLCVKKVLRT (170 aa)) the chain is on the cytoplasmic side. An II repeat occupies 559-833 (CCPQWLCVKK…EGEARKTKVQ (275 aa)). Residues 573 to 596 (VMTDPFTELAITICIIINTVFLAM) traverse the membrane as a helical segment. Over 597 to 607 (EHHKMEASFEK) the chain is Extracellular. The helical transmembrane segment at 608–631 (MLNIGNLVFTSIFIAEMCLKIIAL) threads the bilayer. Residues 632–639 (DPYHYFRR) are Cytoplasmic-facing. The chain crosses the membrane as a helical span at residues 640–659 (GWNIFDSIVALLSFADVMNC). At 660–667 (VLQKRSWP) the chain is on the extracellular side. A helical; Voltage-sensor transmembrane segment spans residues 668-687 (FLRSFRVLRVFKLAKSWPTL). Topologically, residues 688–702 (NTLIKIIGNSVGALG) are cytoplasmic. A helical transmembrane segment spans residues 703–725 (SLTVVLVIVIFIFSVVGMQLFGR). Over 726–753 (SFNSQKSPKLCNPTGPTVSCLRHWHMGD) the chain is Extracellular. Residues 754-774 (FWHSFLVVFRILCGEWIENMW) constitute an intramembrane region (pore-forming). Residues 775–785 (ECMQEANASSS) are Extracellular-facing. Cysteine 776 and cysteine 787 are oxidised to a cystine. Asparagine 781 carries an N-linked (GlcNAc...) asparagine glycan. A helical transmembrane segment spans residues 786–811 (LCVIVFILITVIGKLVVLNLFIALLL). Over 812 to 1051 (NSFSNEERNG…WWNLRKTCYQ (240 aa)) the chain is Cytoplasmic. Residues 1044–1339 (NLRKTCYQIV…KKYYNAMKKL (296 aa)) form an III repeat. The helical transmembrane segment at 1052–1074 (IVKHSWFESFIIFVILLSSGALI) threads the bilayer. The Extracellular segment spans residues 1075–1088 (FEDVHLENQPKIQE). The helical transmembrane segment at 1089–1114 (LLNCTDIIFTHIFILEMVLKWVAFGF) threads the bilayer. The Cytoplasmic segment spans residues 1115–1120 (GKYFTS). The chain crosses the membrane as a helical span at residues 1121-1138 (AWCCLDFIIVIVSVTTLI). Residue asparagine 1139 is a topological domain, extracellular. A helical; Voltage-sensor membrane pass occupies residues 1140–1161 (LMELKSFRTLRALRPLRALSQF). The Cytoplasmic portion of the chain corresponds to 1162-1180 (EGMKVVVNALIGAIPAILN). The chain crosses the membrane as a helical span at residues 1181–1202 (VLLVCLIFWLVFCILGVYFFSG). At 1203–1243 (KFGKCINGTDSVINYTIITNKSQCESGNFSWINQKVNFDNV) the chain is on the extracellular side. Asparagine 1209, asparagine 1216, asparagine 1222, and asparagine 1230 each carry an N-linked (GlcNAc...) asparagine glycan. An intramembrane region (pore-forming) is located at residues 1244-1265 (GNAYLALLQVATFKGWMDIIYA). Over 1266-1281 (AVDSTEKEQQPEFESN) the chain is Extracellular. Residues 1282–1308 (SLGYIYFVVFIIFGSFFTLNLFIGVII) form a helical membrane-spanning segment. Residues 1309–1361 (DNFNQQQKKLGGQDIFMTEEQKKYYNAMKKLGSKKPQKPIPRPLNKCQGLVFD) lie on the Cytoplasmic side of the membrane. Residues 1348-1639 (IPRPLNKCQG…WEKFDPEATQ (292 aa)) form an IV repeat. Residues 1362 to 1385 (IVTSQIFDIIIISLIILNMISMMA) traverse the membrane as a helical segment. Residues 1386 to 1396 (ESYNQPKAMKS) lie on the Extracellular side of the membrane. A helical transmembrane segment spans residues 1397 to 1420 (ILDHLNWVFVVIFTLECLIKIFAL). At 1421-1426 (RQYYFT) the chain is on the cytoplasmic side. The chain crosses the membrane as a helical span at residues 1427 to 1450 (NGWNLFDCVVVLLSIVSTMISTLE). Residues 1451–1461 (NQEHIPFPPTL) are Extracellular-facing. The helical; Voltage-sensor transmembrane segment at 1462–1484 (FRIVRLARIGRILRLVRAARGIR) threads the bilayer. Residues 1485–1499 (TLLFALMMSLPSLFN) are Cytoplasmic-facing. A helical transmembrane segment spans residues 1500-1522 (IGLLLFLIMFIYAILGMNWFSKV). Residues 1523–1536 (NPESGIDDIFNFKT) are Extracellular-facing. Positions 1537 to 1559 (FASSMLCLFQISTSAGWDSLLSP) form an intramembrane region, pore-forming. Over 1560 to 1579 (MLRSKESCNSSSENCHLPGI) the chain is Extracellular. The N-linked (GlcNAc...) asparagine glycan is linked to asparagine 1568. A helical membrane pass occupies residues 1580-1604 (ATSYFVSYIIISFLIVVNMYIAVIL). Topologically, residues 1605 to 1791 (ENFNTATEES…GVAKGKVHCD (187 aa)) are cytoplasmic.

Belongs to the sodium channel (TC 1.A.1.10) family. Nav1.9/SCN11A subfamily. In terms of assembly, the voltage-resistant sodium channel consists of an ion conducting pore forming alpha-subunit regulated by one or more auxiliary subunits SCN1B, SCN2B and SCN3B. As to expression, expressed in the dorsal root ganglia and trigeminal ganglia, olfactory bulb, hippocampus, cerebellar cortex, spinal cord, spleen, small intestine and placenta.

The protein resides in the cell membrane. It catalyses the reaction Na(+)(in) = Na(+)(out). Activity is not sensitive to inhibition by tetrodotoxin. Sodium channel mediating the voltage-dependent sodium ion permeability of excitable membranes. Assuming opened or closed conformations in response to the voltage difference across the membrane, the protein forms a sodium-selective channel through which sodium ions may pass in accordance with their electrochemical gradient. Involved in membrane depolarization during action potential in nociceptors which function as key relay stations for the electrical transmission of pain signals from the periphery to the central nervous system. Also involved in rapid BDNF-evoked neuronal depolarization. This chain is Sodium channel protein type 11 subunit alpha, found in Homo sapiens (Human).